The chain runs to 233 residues: Phosphoribosylaminoimidazole-succinocarboxamide synthase (233 aa).

This sequence belongs to the SAICAR synthetase family.

It catalyses the reaction 5-amino-1-(5-phospho-D-ribosyl)imidazole-4-carboxylate + L-aspartate + ATP = (2S)-2-[5-amino-1-(5-phospho-beta-D-ribosyl)imidazole-4-carboxamido]succinate + ADP + phosphate + 2 H(+). It participates in purine metabolism; IMP biosynthesis via de novo pathway; 5-amino-1-(5-phospho-D-ribosyl)imidazole-4-carboxamide from 5-amino-1-(5-phospho-D-ribosyl)imidazole-4-carboxylate: step 1/2. The polypeptide is Phosphoribosylaminoimidazole-succinocarboxamide synthase (Staphylococcus saprophyticus subsp. saprophyticus (strain ATCC 15305 / DSM 20229 / NCIMB 8711 / NCTC 7292 / S-41)).